Here is a 60-residue protein sequence, read N- to C-terminus: Putative SERF-like protein (60 aa).

Over residues Met1 to Ala53 the composition is skewed to basic and acidic residues. Residues Met1–Lys60 form a disordered region.

The protein belongs to the SERF family.

This chain is Putative SERF-like protein, found in Drosophila melanogaster (Fruit fly).